Reading from the N-terminus, the 199-residue chain is Probable GTP-binding protein EngB (199 aa).

Residues 28–199 (DLPEIALAGR…DSWDAILEQV (172 aa)) enclose the EngB-type G domain. Residues 36–43 (GRSNVGKS), 63–67 (GKTQL), 81–84 (DVPG), 148–151 (TKAD), and 180–182 (FSS) contribute to the GTP site. Mg(2+) is bound by residues S43 and T65.

Belongs to the TRAFAC class TrmE-Era-EngA-EngB-Septin-like GTPase superfamily. EngB GTPase family. Mg(2+) is required as a cofactor.

Necessary for normal cell division and for the maintenance of normal septation. The sequence is that of Probable GTP-binding protein EngB from Streptococcus pyogenes serotype M49 (strain NZ131).